A 311-amino-acid chain; its full sequence is Acetyl-coenzyme A carboxylase carboxyl transferase subunit alpha (311 aa).

The 251-residue stretch at 36–286 (NLSKEISKVY…ANYFISELAE (251 aa)) folds into the CoA carboxyltransferase C-terminal domain.

The protein belongs to the AccA family. Acetyl-CoA carboxylase is a heterohexamer composed of biotin carboxyl carrier protein (AccB), biotin carboxylase (AccC) and two subunits each of ACCase subunit alpha (AccA) and ACCase subunit beta (AccD).

Its subcellular location is the cytoplasm. It carries out the reaction N(6)-carboxybiotinyl-L-lysyl-[protein] + acetyl-CoA = N(6)-biotinyl-L-lysyl-[protein] + malonyl-CoA. The protein operates within lipid metabolism; malonyl-CoA biosynthesis; malonyl-CoA from acetyl-CoA: step 1/1. Component of the acetyl coenzyme A carboxylase (ACC) complex. First, biotin carboxylase catalyzes the carboxylation of biotin on its carrier protein (BCCP) and then the CO(2) group is transferred by the carboxyltransferase to acetyl-CoA to form malonyl-CoA. This chain is Acetyl-coenzyme A carboxylase carboxyl transferase subunit alpha, found in Campylobacter concisus (strain 13826).